The chain runs to 512 residues: Sucrose transport protein SUC2 (512 aa).

The Cytoplasmic segment spans residues 1 to 31 (MVSHPMEKAANGASALETQTGELDQPERLRK). The helical transmembrane segment at 32 to 52 (IISVSSIAAGVQFGWALQLSL) threads the bilayer. The Extracellular segment spans residues 53 to 65 (LTPYVQLLGIPHK). The helical transmembrane segment at 66–86 (WASLIWLCGPISGMLVQPIVG) threads the bilayer. The Cytoplasmic segment spans residues 87–100 (YHSDRCTSRFGRRR). The chain crosses the membrane as a helical span at residues 101–121 (PFIVAGAGLVTVAVFLIGYAA). The Extracellular segment spans residues 122–138 (DIGHSMGDQLDKPPKTR). Residues 139–159 (AIAIFALGFWILDVANNTLQG) form a helical membrane-spanning segment. Over 160–177 (PCRAFLADLSAGNAKKTR) the chain is Cytoplasmic. The helical transmembrane segment at 178–198 (TANAFFSFFMAVGNVLGYAAG) threads the bilayer. Over 199–223 (SYRNLYKVVPFTMTESCDLYCANLK) the chain is Extracellular. Residues 224 to 244 (TCFFLSITLLLIVTFVSLCYV) form a helical membrane-spanning segment. At 245–278 (KEKPWTPEPTADGKASNVPFFGEIFGAFKELKRP) the chain is on the cytoplasmic side. The helical transmembrane segment at 279-299 (MWMLLIVTALNWIAWFPFLLF) threads the bilayer. At 300–332 (DTDWMGREVYGGNSDATATAASKKLYNDGVRAG) the chain is on the extracellular side. Residues 333–353 (ALGLMLNAIVLGFMSLGVEWI) form a helical membrane-spanning segment. Over 354–362 (GRKLGGAKR) the chain is Cytoplasmic. Residues 363–383 (LWGIVNFILAICLAMTVVVTK) traverse the membrane as a helical segment. Residues 384-407 (QAENHRRDHGGAKTGPPGNVTAGA) are Extracellular-facing. N-linked (GlcNAc...) asparagine glycosylation occurs at Asn-402. A helical transmembrane segment spans residues 408–428 (LTLFAILGIPQAITFSIPFAL). Residues 429 to 440 (ASIFSTNSGAGQ) lie on the Cytoplasmic side of the membrane. The chain crosses the membrane as a helical span at residues 441 to 461 (GLSLGVLNLAIVVPQMVISVG). The Extracellular portion of the chain corresponds to 462-473 (GGPFDELFGGGN). The helical transmembrane segment at 474–494 (IPAFVLGAIAAAVSGVLALTV) threads the bilayer. Over 495-512 (LPSPPPDAPAFKATMGFH) the chain is Cytoplasmic.

It belongs to the glycoside-pentoside-hexuronide (GPH) cation symporter transporter (TC 2.A.2.4) family. Homodimer. Interacts with SUC3 and SUC4. In terms of tissue distribution, expressed in leaves and, to a lower extent, in roots, flowers and stems. Highly specific to the phloem, exclusively localized in companion cells (at protein level).

It is found in the cell membrane. The catalysed reaction is sucrose(out) + H(+)(out) = sucrose(in) + H(+)(in). It functions in the pathway glycan biosynthesis; sucrose metabolism. With respect to regulation, inhibited by protonophores (e.g. dinitrophenol and carbonyl cyanide m-chlorophenyl-hydrazone (CCCP)) and SH group inhibitors (e.g. N-ethylmaleimide (NEM) and p-chloromercuriphenyl sulphonic acid (PCMPS)). Responsible for the transport of sucrose into the cell, with the concomitant uptake of protons (symport system). Can also transport other glucosides such as maltose, arbutin (hydroquinone-beta-D-glucoside), salicin (2-(hydroxymethyl)phenyl-beta-D-glucoside), alpha-phenylglucoside, beta-phenylglucoside, alpha-paranitrophenylglucoside, beta-paranitrophenylglucoside, and paranitrophenyl-beta-thioglucoside. May also transport biotin. Required for apoplastic phloem sucrose loading in source tissues (e.g. leaves) in order to transport it to sink tissues (e.g. roots, flowers). This is Sucrose transport protein SUC2 from Arabidopsis thaliana (Mouse-ear cress).